Consider the following 101-residue polypeptide: MDKSKRPFRKSKRSFRKRLPPIGSGDRIDYRNMSLISRFISEQGKILSRRVNRLTLKQQRLITTAIKQARILSSLPFLNNEKQLERTESIPRTTGTRIRNK.

Basic residues predominate over residues 1–19 (MDKSKRPFRKSKRSFRKRL). Residues 1–23 (MDKSKRPFRKSKRSFRKRLPPIG) are disordered.

This sequence belongs to the bacterial ribosomal protein bS18 family. As to quaternary structure, part of the 30S ribosomal subunit.

Its subcellular location is the plastid. The protein localises to the chloroplast. This chain is Small ribosomal subunit protein bS18c, found in Chloranthus spicatus (Chulantree).